Here is a 499-residue protein sequence, read N- to C-terminus: MTDQEQGQEEHKLIAQRREKLTKLRERGVAFPNDFRRNVMSGELHAEYDAKPAEFFEQNAIRVSVAGRMMAKRIMGKASFTQILDMSGRIQLFIQRDSLPDGAYSDFKTWDVGDILGAEGTLFKTKTGELTVNVDSLRLLTKSLRPLPEKFHGLSDTETRYRQRYVDLIMNEPVRETFRTRTRVIQFIRQFLDQRGFLEVETPMMQAIPGGATARPFATHHHALDMQLFLRIAPELYLKRLVVGGFERVYEINRNFRNEGLSTRHNPEFTMVEFYEAYANYHDLMDLTEDLLRDLTLEVLGSTQVHYQGETYDFERPFTRMTVKESILQHNPDVSEAELADLERARAVAQRLGIPLKDSYGLGKVWIEIFEKTVEGNLKDPTFITAYPTEVSPLARRNDEDPFVTDRFEFFVGGREIANGFSELNDYEDQAERFRKQVQEKEAGDDEAMHFDADYLRALEHGMPPTAGEGIGIDRLVMLLTDSPSIRDVLLFPHMRPES.

Mg(2+) is bound by residues glutamate 409 and glutamate 416.

This sequence belongs to the class-II aminoacyl-tRNA synthetase family. As to quaternary structure, homodimer. Mg(2+) serves as cofactor.

Its subcellular location is the cytoplasm. It catalyses the reaction tRNA(Lys) + L-lysine + ATP = L-lysyl-tRNA(Lys) + AMP + diphosphate. This Thioalkalivibrio sulfidiphilus (strain HL-EbGR7) protein is Lysine--tRNA ligase.